A 219-amino-acid chain; its full sequence is Phosphatidylinositol phosphate synthase (219 aa).

Residue 29–32 (NQLT) coordinates a CDP-1,2-diacyl-sn-glycerol. Transmembrane regions (helical) follow at residues 31–47 (LTLVSAGLTVGVALLLI) and 53–72 (IWAAVLTGLFAAFDMIDGTV). Mg(2+)-binding residues include Asp-66 and Asp-69. A CDP-1,2-diacyl-sn-glycerol is bound by residues Gly-70, Arg-74, and Thr-80. Mg(2+)-binding residues include Asp-87 and Asp-91. Catalysis depends on Asp-91, which acts as the Proton acceptor. The next 4 membrane-spanning stretches (helical) occupy residues 93–110 (ITDGALFGAITWWLVYSY), 116–133 (LVAASLVCLVASQVISYV), 154–171 (RLIVSLVGLGLTGMGVPY), and 177–194 (LWALAAGSIYTVVQRLVM).

This sequence belongs to the CDP-alcohol phosphatidyltransferase class-I family. In terms of assembly, homodimer. It depends on Mg(2+) as a cofactor.

The protein localises to the cell membrane. The catalysed reaction is a CDP-1,2-diacyl-sn-glycerol + 1D-myo-inositol 3-phosphate = a 1,2-diacyl-sn-glycero-3-phospho-(1D-myo-inositol-3-phosphate) + CMP + H(+). It catalyses the reaction 1,2-di-(9Z-octadecenoyl)-sn-glycero-3-cytidine-5'-diphosphate + 1D-myo-inositol 3-phosphate = 1,2-di-(9Z-octadecenoyl)-sn-glycero-3-phospho-(1D-myo-inositol-3-phosphate) + CMP + H(+). The protein operates within phospholipid metabolism; phosphatidylinositol phosphate biosynthesis. Its function is as follows. Catalyzes the conjugation of the 1'-hydroxyl group of D-myo-inositol-3-phosphate (also named L-myo-inositol-1-phosphate) with a lipid tail of cytidine diphosphate diacylglycerol (CDP-DAG), forming phosphatidylinositol phosphate (PIP) and CMP. PIP is a precursor of phosphatidylinositol (PI) which is an essential lipid required for cell wall formation. In Corynebacterium glutamicum (strain ATCC 13032 / DSM 20300 / JCM 1318 / BCRC 11384 / CCUG 27702 / LMG 3730 / NBRC 12168 / NCIMB 10025 / NRRL B-2784 / 534), this protein is Phosphatidylinositol phosphate synthase.